Consider the following 441-residue polypeptide: Ribosomal protein uS12 methylthiotransferase RimO (441 aa).

In terms of domain architecture, MTTase N-terminal spans 8–118; that stretch reads PKIGFVSLGC…VLEHVHHYVP (111 aa). Residues C17, C53, C82, C150, C154, and C157 each coordinate [4Fe-4S] cluster. Positions 136–373 constitute a Radical SAM core domain; it reads LTPRHYAYLK…MQLQQQISAE (238 aa). The TRAM domain maps to 376 to 441; it reads QEKVGREILV…DEYDLWGSRV (66 aa).

It belongs to the methylthiotransferase family. RimO subfamily. It depends on [4Fe-4S] cluster as a cofactor.

It is found in the cytoplasm. It carries out the reaction L-aspartate(89)-[ribosomal protein uS12]-hydrogen + (sulfur carrier)-SH + AH2 + 2 S-adenosyl-L-methionine = 3-methylsulfanyl-L-aspartate(89)-[ribosomal protein uS12]-hydrogen + (sulfur carrier)-H + 5'-deoxyadenosine + L-methionine + A + S-adenosyl-L-homocysteine + 2 H(+). Its function is as follows. Catalyzes the methylthiolation of an aspartic acid residue of ribosomal protein uS12. The polypeptide is Ribosomal protein uS12 methylthiotransferase RimO (Shigella flexneri).